We begin with the raw amino-acid sequence, 230 residues long: Ribosomal RNA small subunit methyltransferase G (230 aa).

S-adenosyl-L-methionine contacts are provided by residues Gly-74, Phe-79, 124-125 (AE), and Arg-141.

The protein belongs to the methyltransferase superfamily. RNA methyltransferase RsmG family.

It is found in the cytoplasm. Its function is as follows. Specifically methylates the N7 position of a guanine in 16S rRNA. The protein is Ribosomal RNA small subunit methyltransferase G of Acholeplasma laidlawii (strain PG-8A).